The sequence spans 99 residues: Putative membrane protein insertion efficiency factor (99 aa).

Belongs to the UPF0161 family.

It localises to the cell inner membrane. Functionally, could be involved in insertion of integral membrane proteins into the membrane. The sequence is that of Putative membrane protein insertion efficiency factor from Salinibacter ruber (strain DSM 13855 / M31).